A 465-amino-acid polypeptide reads, in one-letter code: Box C/D snoRNA protein 1 (465 aa).

Positions 1–72 (MEFAAENEGK…GSRQRPEEIP (72 aa)) are disordered. At serine 25 the chain carries Phosphoserine. Over residues 56–70 (EIGDGEEGSRQRPEE) the composition is skewed to basic and acidic residues. Glycyl lysine isopeptide (Lys-Gly) (interchain with G-Cter in SUMO2) cross-links involve residues lysine 79, lysine 108, lysine 118, lysine 138, lysine 148, lysine 157, lysine 168, lysine 178, and lysine 195. 8 residues coordinate Zn(2+): cysteine 215, cysteine 218, cysteine 227, cysteine 230, cysteine 235, cysteine 239, histidine 243, and cysteine 249. The HIT-type zinc finger occupies 215-249 (CETCGTEEAKYRCPRCMRYSCSLPCVKKHKAELTC). Lysine 454 participates in a covalent cross-link: Glycyl lysine isopeptide (Lys-Gly) (interchain with G-Cter in SUMO2).

Belongs to the BCD1 family. In terms of assembly, interacts with FBL, SNU13, NOP58, NUFIP1, RUVBL1, RUVBL2 and TAF9. Interacts (via HIT-type zinc finger) with the RUVBL1/RUVBL2 complex in the presence of ADP.

Functionally, required for box C/D snoRNAs accumulation involved in snoRNA processing, snoRNA transport to the nucleolus and ribosome biogenesis. In Pongo abelii (Sumatran orangutan), this protein is Box C/D snoRNA protein 1 (ZNHIT6).